A 258-amino-acid polypeptide reads, in one-letter code: Type III pantothenate kinase (258 aa).

Residue 6 to 13 (DVGNTNTV) coordinates ATP. Substrate-binding positions include tyrosine 100 and 107–110 (GADR). The Proton acceptor role is filled by aspartate 109. Aspartate 129 provides a ligand contact to K(+). Threonine 132 contributes to the ATP binding site. Threonine 184 contributes to the substrate binding site.

This sequence belongs to the type III pantothenate kinase family. As to quaternary structure, homodimer. The cofactor is NH4(+). K(+) serves as cofactor.

It localises to the cytoplasm. It catalyses the reaction (R)-pantothenate + ATP = (R)-4'-phosphopantothenate + ADP + H(+). It participates in cofactor biosynthesis; coenzyme A biosynthesis; CoA from (R)-pantothenate: step 1/5. Catalyzes the phosphorylation of pantothenate (Pan), the first step in CoA biosynthesis. The polypeptide is Type III pantothenate kinase (Geobacillus kaustophilus (strain HTA426)).